The sequence spans 76 residues: MMQLAVLICLSLVVNTFAQSCVQDSDCGNDDQCCLYSACATKPGEMFVEESGEGALAKVACSVPAPRALGFVGIHL.

Positions 1–18 (MMQLAVLICLSLVVNTFA) are cleaved as a signal peptide. 3 disulfides stabilise this stretch: cysteine 21–cysteine 34, cysteine 27–cysteine 39, and cysteine 33–cysteine 61.

As to expression, expressed by the venom gland.

It localises to the secreted. Functionally, probable ion channel inhibitor. The polypeptide is U14-hexatoxin-Hi1a (Hadronyche infensa (Fraser island funnel-web spider)).